The sequence spans 1385 residues: DNA-directed RNA polymerase subunit beta' (1385 aa).

Residues Cys-75, Cys-77, Cys-90, and Cys-93 each coordinate Zn(2+). Asp-466, Asp-468, and Asp-470 together coordinate Mg(2+). Zn(2+) is bound by residues Cys-809, Cys-883, Cys-890, and Cys-893.

The protein belongs to the RNA polymerase beta' chain family. In terms of assembly, the RNAP catalytic core consists of 2 alpha, 1 beta, 1 beta' and 1 omega subunit. When a sigma factor is associated with the core the holoenzyme is formed, which can initiate transcription. Mg(2+) serves as cofactor. Zn(2+) is required as a cofactor.

It carries out the reaction RNA(n) + a ribonucleoside 5'-triphosphate = RNA(n+1) + diphosphate. DNA-dependent RNA polymerase catalyzes the transcription of DNA into RNA using the four ribonucleoside triphosphates as substrates. The polypeptide is DNA-directed RNA polymerase subunit beta' (Nitratidesulfovibrio vulgaris (strain ATCC 29579 / DSM 644 / CCUG 34227 / NCIMB 8303 / VKM B-1760 / Hildenborough) (Desulfovibrio vulgaris)).